The chain runs to 370 residues: Quinolinate synthase (370 aa).

Positions 62 and 83 each coordinate iminosuccinate. C128 contacts [4Fe-4S] cluster. Residues 154-156 (YAN) and S171 contribute to the iminosuccinate site. C215 provides a ligand contact to [4Fe-4S] cluster. Iminosuccinate is bound by residues 241 to 243 (HPE) and T258. A [4Fe-4S] cluster-binding site is contributed by C312.

Belongs to the quinolinate synthase family. Type 1 subfamily. [4Fe-4S] cluster serves as cofactor.

Its subcellular location is the cytoplasm. It carries out the reaction iminosuccinate + dihydroxyacetone phosphate = quinolinate + phosphate + 2 H2O + H(+). It participates in cofactor biosynthesis; NAD(+) biosynthesis; quinolinate from iminoaspartate: step 1/1. In terms of biological role, catalyzes the condensation of iminoaspartate with dihydroxyacetone phosphate to form quinolinate. The chain is Quinolinate synthase from Neisseria meningitidis serogroup A / serotype 4A (strain DSM 15465 / Z2491).